The following is a 296-amino-acid chain: 4-hydroxy-tetrahydrodipicolinate synthase (296 aa).

Position 49 (T49) interacts with pyruvate. Y137 serves as the catalytic Proton donor/acceptor. K165 functions as the Schiff-base intermediate with substrate in the catalytic mechanism. V207 is a pyruvate binding site.

The protein belongs to the DapA family. Homotetramer; dimer of dimers.

The protein localises to the cytoplasm. It carries out the reaction L-aspartate 4-semialdehyde + pyruvate = (2S,4S)-4-hydroxy-2,3,4,5-tetrahydrodipicolinate + H2O + H(+). The protein operates within amino-acid biosynthesis; L-lysine biosynthesis via DAP pathway; (S)-tetrahydrodipicolinate from L-aspartate: step 3/4. Functionally, catalyzes the condensation of (S)-aspartate-beta-semialdehyde [(S)-ASA] and pyruvate to 4-hydroxy-tetrahydrodipicolinate (HTPA). This Nitrobacter hamburgensis (strain DSM 10229 / NCIMB 13809 / X14) protein is 4-hydroxy-tetrahydrodipicolinate synthase.